The chain runs to 3071 residues: MLEGLVAGLLNKILGSYVDNLDTKQLNIGVWGGHVSLHNLRIKPEALDKLGIPIEITSGLIGTFTLEIPWSNLRNKSLTINIEDIYLSIHPQAKNSLTRDELEQSQQALKQEQLDSFEILRKNFRETLEESSSNPNISRKQSFIEYLIAKLTDNIQIYIERIHLRFEDNLSDLEKPYSLGLTLYSLRVTSTDASFTEYLLSTDPIPSSCIHKIITVDYFSIYWISKCEISKCTTTEDIFSYLKNLIPSAEKSPAYNYILKPLRATAHVVLFRHPTDQIMQLRGKLSVEEISITLSDHMYYSLLGVIDYFRVVMKQQYYLQYRPKSTPKEKPLEWFKYAILVVKDSVHESRYHWTWKYFKRRRDDRIAYMHIIRKRYLNEQISKEEIDLQKKIEKRNSTYDLIKYRSRVHTSLIEERNSIYLKPKTSAAHGLYDWFSGYIRKPQSQDEDTLASTDKTAADLTDQEQKEFFSAIEWSGQLYPDTVNLDPDMCMANVEVSIAKGSFVIQSHINGRVIPLIKQRFESFATECFIRPQSLKLKVSLKDLDMFDGITNPELEPARVIFAKPSVEESESLQKIPEAYRTHLFFLLLDTKPVYKASSTLIVHLRTLVIIYNRVCIESLLAFFVPPRTKIEHVSEWGYSAAAKVMTLARQTRASLDYALEMHKTSDMTIDLQAPLIVVREECTDLKSPTLFLDVGRALVHTQLVDDAIIDKFRKLQSKKINNEQLKQLENLMYDKFTISLFNVRCLIGPDYETGWRCLPKGCDYHILKECSLDINFEISILQKATNLTKFKVSSHMKHAEIMFSDVQYKVFINMMSNILPTLPVAEIPFTYQQFLDAVKPPPFFDAPDNFQITHTSLGSHANENTAAQFMAQQIFAFYFKVDYAICSLYRRSENYLIPVVRAFTEFYIDLVVRKFDYLVTSKLNDLVIKEFTYPSSLCDNVLVRSSPSPKNNFDDTVFISYTSIDYDSPELDSVYEGVRTTIAVVLSDLILNVEPTGFSFVYDFIRATFTSLNDEYMIGEDPELTRKISPVEGIIPEDANVRFDNVDIFLYDCDQHFSTVCLYSANMHMEFREKFFLQARFYDLEVKNHMKSNNPPKTIVKIDDNDLFIFKYESYDIPKDISKPTCDCVYDISFGSLTFYFQKSYFNAIYDFLLKLKRFQELFSSIRYAIYYKLYGNKVSLTYPKFELRIKHPKVYFDDVLDEERNCRMQLIVKPQSFYAFSKCPIVEKNSKKSIFSCEITKVEFHTAVPSSSHHDVLMEENNVHLDLTYDANYTTGAYVFKATGDLDPVILNMCQSHHVIFWDLIDVATTFARVDSSFYTSENLRRELDKAFDRSGTAAKLKHPKKTVVETLDILTTFNLPEIRLNVHTDDFWIHGGDLTQLHSILSFFGFSLDYNFYSSGRCYAEFSIDSIQLKDCNPQDNVVFLDVLEYSENHNRLVNGCLEYDSQNPRYNLVLDIDSPKIFVNLNYLYSIWSIFVHWHRAYYSHLDYLTEVEYFIMGNPNQNACGEESYWYYRITFVDMTLLFFRNVSDANLYSLPMFFGELLITQQSIFAVTANNMKINACPLSETANISNQLADPFGFRYTYSQHTVNKIQIITNITLDFDSFVLRTTVNDFLFLQTILRKIYNFYYALYDVPTTDVELLKRTKDDQLATNPDFLQLSVDTGQPSSVFGIRICKEEFLLTVDGIRLLVISQLHDLPLLNINIKPFQVDLNDWSSELNSNAHLELFMNFYNFSNSHWEPFLEPWKVGVHISRNPNTSKTAVHVFSREKLDLVITPQLIETLHFGFTKVISTPFPIEFKCDAPYRIHNYTGHAVSVWADFENAADSCVRHLENNEETDWKFEEWRQMQDVVKQDQDRSYIGFHFENSKWESLRHVRVNRVGEHIYPLISYDQDELKHYMVVDVNLGEDYIKHITLRSPLLLINETQMEIDVVFCDSDGIQRSQIYHMSPEESCSLPIETAYYYSIHIRPVSEFKFNWTSEAISWKDLVDNKQSLVTCQHSDNTFSTPACRFAANAELKSQTISNHYPFMHITISALLEVKNLLPIDLNIRIIDKDQEGVWMSNVGIGECAYVHSINISHVLLLQAESSESHYLPSSLATIITNDSAQERDEYMTITLQGGRKTRLGLSYTEKYPGIYHIEIFSPYIIINKSGSFLFVGPKNDYNRISFSSASLSSGEDGKVVPCMFSYSHNYGSRRCRLRADNSNWSEPVSFDAIGSVFEVELPSKEDHNKVYRLGIFVETGPDGYSKTNIVTITSRFIVRNKTRWSLVIAEPYNDFIAEIAPEGEEFLTYLRKHSHPMLKLSSSDCYLWSSSFYIEEIGSTHVRLMTSEGEKLLRLEIVIKNATIFISIFEETGDWPYYIKNESGVLLKFWQVNPIDASEGKNNTALLKYHDIPPHSEVKYSWDYPCCANKEIALCYGDQKCLTTLAEIGPLSPFKFTDASNNTKFISRDIVANGLSKILILKDYDPSKAVRKPKIYSKVSTEERDFNLEQFDSGIDLSVKFLLEGIGISLVERNTQELAYLTFHGINLFFTDSHLIRTFKLDVRWIQIDNQLYGGIYPIILYPSILSQEDTMNDNSLLPTFHSMVAVVKNDTYGVTYVKYATILLQELTIEIDEDFAFAALEYIKDSVPRSKRNTGKMFDDSLELVPENLGNDLKVYFEVLNLQPTEMHLSFVRTERINNTDGTVVSSHNPFVFFVNVLSMAIGNINDAPVRLNALLMDNAHVSLRRLFELVKNHYSQELLSQVHKIVGSADFLGNPVGLFTTITSGFADIFYEPFHGFILNEGSYELGIGFAKGTASFIKKAVFGITDSISKVTGTISRSLSVITLDPKFQSRRRAARIRNRPVHILYGVTAGAASLYTGVRSGVRGLALQPIIGARRNGLPGLVKGLGKGLVGFTTKPLVGLFDFASSISEGARNTTTVFDERHIEKLRLSRLMSDDGVVYPFQLREALGQYWLKHLDNGRYFKDFYKAHIIIENKVLVILTNNRILFVQPQQLNCKKEIHLSKVKTVKLQSKEHIFLQLLKGVNFEFSVPENSVRTFFYRKIRDELAAYKHKVNYELEVAL.

A Chorein N-terminal domain is found at Leu2 to Asp115. An SHR-BD domain is found at His2143–Ala2415.

The protein belongs to the VPS13 family.

The protein localises to the golgi apparatus. It localises to the trans-Golgi network. Functionally, mediates the transfer of lipids between membranes at organelle contact sites. May play a role in mitochondrial lipid homeostasis, Golgi vesicle transport, reticulophagy, actin cytoskeleton organization and formation of the forespore membrane. The polypeptide is Intermembrane lipid transfer protein vps1301 (Schizosaccharomyces pombe (strain 972 / ATCC 24843) (Fission yeast)).